Reading from the N-terminus, the 2314-residue chain is A-kinase anchor protein 6 (2314 aa).

The segment covering 1-12 has biased composition (polar residues); sequence MLTMSVTLSPLR. Disordered regions lie at residues 1–25, 285–432, 505–613, and 736–755; these read MLTMSVTLSPLRSQGPDPMATDASP, PSSC…DPPD, SLCR…PCHA, and TDEKSERPSSSEKNESHSAT. Residues 301–311 show a composition bias toward basic and acidic residues; the sequence is SDDHKGEHGED. Residues 319–330 are compositionally biased toward polar residues; the sequence is QLDSTVGMSSLD. Positions 398–420 are enriched in basic and acidic residues; it reads ETQKNERKGSDRKGQVVDLKPEL. The segment covering 569 to 592 has biased composition (low complexity); it reads SKASSSPPCSHSSESSLGSDSIKS. The segment covering 736–753 has biased composition (basic and acidic residues); it reads TDEKSERPSSSEKNESHS. Spectrin repeat units follow at residues 768–847 and 1033–1148; these read QHQE…QLLE and ILEK…LLDD. The residue at position 1072 (serine 1072) is a Phosphoserine. The segment at 1349–1401 is disordered; the sequence is CHSGDLSQNSGSESGIVSEGDNEMPTNSDMSLFSMVDGSPSNPETEHPDPQMG. The span at 1353 to 1363 shows a compositional bias: polar residues; the sequence is DLSQNSGSESG. Phosphoserine is present on residues serine 1568 and serine 1593. Composition is skewed to basic and acidic residues over residues 1816-1831 and 1874-1891; these read RSGVTDEIKVNKDGGG and GENKKSTYDVSKDPHVAD. 3 disordered regions span residues 1816–1838, 1854–1926, and 1940–2012; these read RSGVTDEIKVNKDGGGNEKANPS, LSEN…KTIS, and SEDS…SGAR. Over residues 1917 to 1926 the composition is skewed to polar residues; sequence NLASNVKTIS. Residues 1944–1958 are compositionally biased toward basic and acidic residues; sequence SVARKEFCPPNDRHP. Positions 2062 to 2075 are PKA-RII subunit binding domain; the sequence is IIDMASTALKSKSQ. A disordered region spans residues 2166-2286; the sequence is EEAGLPGALP…NAKQPKGKVA (121 aa). Residues 2215–2226 show a composition bias toward basic and acidic residues; it reads GADDAKEGDDVS. Over residues 2227–2243 the composition is skewed to polar residues; that stretch reads HTSQGCAESTEPTTPSG.

As to quaternary structure, interacts with RII subunit of PKA, phosphatase 2B (calcineurin) and AKAP79. Interacts with SYNPO2.

The protein localises to the sarcoplasmic reticulum. Its subcellular location is the nucleus membrane. Binds to type II regulatory subunits of protein kinase A and anchors/targets them to the nuclear membrane or sarcoplasmic reticulum. May act as an adapter for assembling multiprotein complexes. This chain is A-kinase anchor protein 6 (Akap6), found in Rattus norvegicus (Rat).